A 122-amino-acid chain; its full sequence is LYR motif-containing protein 1 (122 aa).

This sequence belongs to the complex I LYR family.

Functionally, may promote cell proliferation and inhibition of apoptosis of preadipocytes. This Rattus norvegicus (Rat) protein is LYR motif-containing protein 1 (Lyrm1).